The primary structure comprises 180 residues: CASP-like protein XL3 (180 aa).

Residues 1–7 (MELSIQK) are Cytoplasmic-facing. A helical transmembrane segment spans residues 8–28 (IEALIRLSTIVMLVLTACLIG). The Extracellular portion of the chain corresponds to 29–49 (LDSQTKVIFYVQKKASFKDLR). Residues 50 to 70 (ALVGLLYITSLAAAYNLLQLC) traverse the membrane as a helical segment. The Cytoplasmic segment spans residues 71–98 (CSSFSASYKGTSLQSYAYLAWLRYILDQ). The chain crosses the membrane as a helical span at residues 99-119 (AVVYAVFAGNLAALEHSFLVL). At 120–140 (TGEENFQWLKWCNKYTRFCTQ) the chain is on the extracellular side. Residues 141–161 (IGGSLLCGFVASLLMFSIASI) form a helical membrane-spanning segment. Residues 162–180 (SAFNLFRQYSPTKFMHLKL) lie on the Cytoplasmic side of the membrane.

It belongs to the Casparian strip membrane proteins (CASP) family. As to quaternary structure, homodimer and heterodimers.

It localises to the cell membrane. This chain is CASP-like protein XL3 (XL3), found in Gossypium hirsutum (Upland cotton).